The sequence spans 951 residues: Cation channel sperm-associated auxiliary subunit epsilon (951 aa).

Residues 1–19 (MSAREVAVLLLWLSCYGSA) form the signal peptide. Over 20–903 (LWRYSTNSPN…ETFGLIPSPS (884 aa)) the chain is Extracellular. 4 cysteine pairs are disulfide-bonded: Cys57-Cys71, Cys101-Cys206, Cys246-Cys336, and Cys410-Cys413. Asn61 and Asn114 each carry an N-linked (GlcNAc...) asparagine glycan. Residues Asn414, Asn472, Asn487, Asn493, and Asn535 are each glycosylated (N-linked (GlcNAc...) asparagine). Intrachain disulfides connect Cys583–Cys690, Cys703–Cys885, Cys719–Cys752, and Cys804–Cys835. A glycan (N-linked (GlcNAc...) asparagine) is linked at Asn796. N-linked (GlcNAc...) asparagine glycosylation is found at Asn854, Asn881, and Asn886. Residues 904 to 924 (VYLVASFLFVLMLLFFTILVL) traverse the membrane as a helical segment. Residues 925–951 (SYFRYMRIYRRYIYEPLHKPQRKRKKN) lie on the Cytoplasmic side of the membrane.

This sequence belongs to the CATSPERD family. Component of the CatSper complex or CatSpermasome composed of the core pore-forming members CATSPER1, CATSPER2, CATSPER3 and CATSPER4 as well as auxiliary members CATSPERB, CATSPERG, CATSPERD, CATSPERE, CATSPERZ, C2CD6/CATSPERT, TMEM249, TMEM262 and EFCAB9. HSPA1 may be an additional auxiliary complex member. The core complex members CATSPER1, CATSPER2, CATSPER3 and CATSPER4 form a heterotetrameric channel. The auxiliary CATSPERB, CATSPERG, CATSPERD and CATSPERE subunits form a pavilion-like structure over the pore which stabilizes the complex through interactions with CATSPER4, CATSPER3, CATSPER1 and CATSPER2 respectively. TMEM262/CATSPERH interacts with CATSPERB, further stabilizing the complex. C2CD6/CATSPERT interacts at least with CATSPERD and is required for targeting the CatSper complex in the flagellar membrane.

Its subcellular location is the cell projection. It is found in the cilium. It localises to the flagellum membrane. In terms of biological role, auxiliary component of the CatSper complex, a complex involved in sperm cell hyperactivation. Sperm cell hyperactivation is needed for sperm motility which is essential late in the preparation of sperm for fertilization. In Homo sapiens (Human), this protein is Cation channel sperm-associated auxiliary subunit epsilon.